The following is a 621-amino-acid chain: Chaperone protein HtpG (621 aa).

The segment at 1 to 341 (MSNQEYTFQT…SEDLPLNVSR (341 aa)) is a; substrate-binding. The b stretch occupies residues 342 to 547 (EILQQNKILA…GDEQNAMMAN (206 aa)). Positions 548–621 (FMRQMGQSVP…RLNSVLLKAL (74 aa)) are c.

It belongs to the heat shock protein 90 family. As to quaternary structure, homodimer.

It localises to the cytoplasm. Molecular chaperone. Has ATPase activity. The protein is Chaperone protein HtpG of Helicobacter pylori (strain HPAG1).